We begin with the raw amino-acid sequence, 123 residues long: uncharacterized protein (123 aa).

It to insertion element IS1016 transposase.

This is an uncharacterized protein from Haemophilus influenzae (strain ATCC 51907 / DSM 11121 / KW20 / Rd).